We begin with the raw amino-acid sequence, 316 residues long: N-acetylmuramic acid 6-phosphate etherase (316 aa).

The SIS domain occupies 66-229 (IVAAIGRGGR…STASMIRLGK (164 aa)). Residue Glu-94 is the Proton donor of the active site. Residue Glu-125 is part of the active site.

It belongs to the GCKR-like family. MurNAc-6-P etherase subfamily. In terms of assembly, homodimer.

It carries out the reaction N-acetyl-D-muramate 6-phosphate + H2O = N-acetyl-D-glucosamine 6-phosphate + (R)-lactate. It functions in the pathway amino-sugar metabolism; 1,6-anhydro-N-acetylmuramate degradation. Its pathway is amino-sugar metabolism; N-acetylmuramate degradation. The protein operates within cell wall biogenesis; peptidoglycan recycling. Its function is as follows. Specifically catalyzes the cleavage of the D-lactyl ether substituent of MurNAc 6-phosphate, producing GlcNAc 6-phosphate and D-lactate. Together with AnmK, is also required for the utilization of anhydro-N-acetylmuramic acid (anhMurNAc) either imported from the medium or derived from its own cell wall murein, and thus plays a role in cell wall recycling. The polypeptide is N-acetylmuramic acid 6-phosphate etherase (Jannaschia sp. (strain CCS1)).